We begin with the raw amino-acid sequence, 912 residues long: uncharacterized protein (912 aa).

2 stretches are compositionally biased toward basic and acidic residues: residues 20–32 (IERLREQGRAEPA) and 39–67 (HEYEHTQGSRSHSSKDGSRKDRMSSEDKT). The segment at 20 to 91 (IERLREQGRA…KPTLPQPETD (72 aa)) is disordered. Over residues 68–77 (RHKKLKHRSR) the composition is skewed to basic residues.

This is an uncharacterized protein from Penicillium chrysogenum virus (isolate Caston/2003) (PcV).